Reading from the N-terminus, the 208-residue chain is MFTPIDQAIEHFKQNKFVIVMDDAGRENEGDLICAAENVSTEQMAFLVRHSSGYVCAPMTNAIADKLDLPLLRTGMKFESNDDDRHGTAYTITVDVAQGTTTGISAHDRSMTCRALADSSSTPKSFLKPGHICPLRAADGGVLQRRGHTEAGVDLCKLSGLSPVAVIGELVNDDEQGTMMRLNDCQAFGKKHGIPLISIEELAQYLKK.

Thr-3 is modified (phosphothreonine). Glu-27 contacts Mg(2+). Residue Asp-31 coordinates D-ribulose 5-phosphate. At Cys-56 the chain carries S-glutathionyl cysteine; by GRX2. D-ribulose 5-phosphate-binding positions include Thr-88 and 145–149 (RRGHT). Mg(2+) is bound at residue His-148.

Belongs to the DHBP synthase family. As to quaternary structure, homodimer. Mg(2+) serves as cofactor. The cofactor is Mn(2+). S-glutathionylation of Cys-56 is reversible and dependent on the cytoplasmic isoform of glutaredoxin-2.

The protein localises to the cytoplasm. It is found in the nucleus. Its subcellular location is the mitochondrion intermembrane space. It carries out the reaction D-ribulose 5-phosphate = (2S)-2-hydroxy-3-oxobutyl phosphate + formate + H(+). It participates in cofactor biosynthesis; riboflavin biosynthesis; 2-hydroxy-3-oxobutyl phosphate from D-ribulose 5-phosphate: step 1/1. Functionally, catalyzes the conversion of D-ribulose 5-phosphate to formate and 3,4-dihydroxy-2-butanone 4-phosphate. Also has an unrelated function in expression of mitochondrial respiration. In Saccharomyces cerevisiae (strain ATCC 204508 / S288c) (Baker's yeast), this protein is 3,4-dihydroxy-2-butanone 4-phosphate synthase (RIB3).